Here is an 800-residue protein sequence, read N- to C-terminus: Cation/H(+) antiporter 19 (800 aa).

Transmembrane regions (helical) follow at residues 30–50 (FALP…RLLA), 60–77 (RVIA…SALG), 92–112 (LTVL…LVGL), 127–147 (LLIA…TSFV), 158–178 (QLPF…PVLA), 196–216 (MSAA…AIAL), 224–244 (LVSV…VVAI), 278–298 (FVTD…GIVA), 315–335 (LVSG…TDVT), 343–363 (WGLL…GTVG), 375–395 (AVTL…VLNI), and 408–428 (AILV…VMLI). The tract at residues 776 to 800 (ADTRPLVEEDAEYDQSSRDISDLTA) is disordered. Residues 790–800 (QSSRDISDLTA) are compositionally biased toward basic and acidic residues.

The protein belongs to the monovalent cation:proton antiporter 2 (CPA2) transporter (TC 2.A.37) family. CHX (TC 2.A.37.4) subfamily. Expressed in the whole plant but preferentially in pollen.

It localises to the membrane. Functionally, may operate as a cation/H(+) antiporter. The chain is Cation/H(+) antiporter 19 (CHX19) from Arabidopsis thaliana (Mouse-ear cress).